The sequence spans 140 residues: ATP synthase epsilon chain (140 aa).

It belongs to the ATPase epsilon chain family. In terms of assembly, F-type ATPases have 2 components, CF(1) - the catalytic core - and CF(0) - the membrane proton channel. CF(1) has five subunits: alpha(3), beta(3), gamma(1), delta(1), epsilon(1). CF(0) has three main subunits: a, b and c.

It localises to the cell inner membrane. Produces ATP from ADP in the presence of a proton gradient across the membrane. The sequence is that of ATP synthase epsilon chain from Yersinia enterocolitica serotype O:8 / biotype 1B (strain NCTC 13174 / 8081).